A 629-amino-acid polypeptide reads, in one-letter code: Forkhead box protein O (629 aa).

T49 bears the Phosphothreonine; by PKB/AKT1 mark. S78 carries the post-translational modification Phosphoserine. Residues 98–204 (WGNLSYADLI…ETSRYEKRRG (107 aa)) constitute a DNA-binding region (fork-head). 5 disordered regions span residues 185–208 (KSVRRRAASMETSRYEKRRGRAKK), 220–274 (GLND…SPIR), 321–368 (QQQF…QTLQ), 394–417 (SPNSVTTTMSPAYPNSEPSSDSLN), and 563–597 (QHLQQQQQQHHQHQQQLLLNNNNNNNNNNSSNSSL). Residue S193 is modified to Phosphoserine; by PKB/AKT1. 2 stretches are compositionally biased toward polar residues: residues 224–233 (ATPSPSSSVS) and 259–268 (RASSNASSCG). S262 bears the Phosphoserine; by PKB/AKT1 mark. Residues S265, S266, and S271 each carry the phosphoserine modification. Residues 332–341 (SQPPPPPYQP) are compositionally biased toward pro residues. The segment covering 342–356 (PQLQQQQQQQPSYSL) has biased composition (low complexity). A compositionally biased stretch (polar residues) spans 394–403 (SPNSVTTTMS).

As to quaternary structure, interacts with melt.

The protein localises to the cytoplasm. It is found in the nucleus. Transcription factor involved in the regulation of the insulin signaling pathway. Consistently activates both the downstream target Thor\d4EBP and the feedback control target InR. Involved in negative regulation of the cell cycle, modulating cell growth and proliferation. In response to cellular stresses, such as nutrient deprivation or increased levels of reactive oxygen species, foxo is activated and inhibits growth through the action of target genes such as Thor. Foxo activated in the adult fat body can regulate lifespan in adults; an insulin peptide itself may function as one secondary messenger of insulin-regulated aging. Also regulates Lip4, homolog of human acid lipases, thereby acting as a key modulator of lipid metabolism by insulin signaling and integrates insulin responses to glucose and lipid homeostasis. This chain is Forkhead box protein O, found in Drosophila persimilis (Fruit fly).